Here is a 481-residue protein sequence, read N- to C-terminus: Aspartyl/glutamyl-tRNA(Asn/Gln) amidotransferase subunit B (481 aa).

It belongs to the GatB/GatE family. GatB subfamily. In terms of assembly, heterotrimer of A, B and C subunits.

It carries out the reaction L-glutamyl-tRNA(Gln) + L-glutamine + ATP + H2O = L-glutaminyl-tRNA(Gln) + L-glutamate + ADP + phosphate + H(+). The catalysed reaction is L-aspartyl-tRNA(Asn) + L-glutamine + ATP + H2O = L-asparaginyl-tRNA(Asn) + L-glutamate + ADP + phosphate + 2 H(+). Allows the formation of correctly charged Asn-tRNA(Asn) or Gln-tRNA(Gln) through the transamidation of misacylated Asp-tRNA(Asn) or Glu-tRNA(Gln) in organisms which lack either or both of asparaginyl-tRNA or glutaminyl-tRNA synthetases. The reaction takes place in the presence of glutamine and ATP through an activated phospho-Asp-tRNA(Asn) or phospho-Glu-tRNA(Gln). The sequence is that of Aspartyl/glutamyl-tRNA(Asn/Gln) amidotransferase subunit B from Pseudomonas fluorescens (strain SBW25).